We begin with the raw amino-acid sequence, 303 residues long: Mesenteric estrogen-dependent adipogenesis protein (303 aa).

It localises to the cytoplasm. Involved in processes that promote adipocyte differentiation, lipid accumulation, and glucose uptake in mature adipocytes. The sequence is that of Mesenteric estrogen-dependent adipogenesis protein (MEDAG) from Bos taurus (Bovine).